The following is a 141-amino-acid chain: Calcitonin (141 aa).

Residues M1–A25 form the signal peptide. Residues A26–S82 constitute a propeptide that is removed on maturation. A Phosphoserine modification is found at S43. Disordered regions lie at residues S64–C85 and I111–N141. C85 and C91 are oxidised to a cystine. P116 is modified (proline amide). The segment covering K118–P132 has biased composition (basic and acidic residues).

Belongs to the calcitonin family.

It localises to the secreted. In terms of biological role, calcitonin is a peptide hormone that causes a rapid but short-lived drop in the level of calcium and phosphate in blood by promoting the incorporation of those ions in the bones. Calcitonin function is mediated by the calcitonin receptor/CALCR and the CALCR-RAMP2 (AMYR2) receptor complex. Its function is as follows. Katacalcin is a potent plasma calcium-lowering peptide. The sequence is that of Calcitonin from Homo sapiens (Human).